We begin with the raw amino-acid sequence, 508 residues long: UDP-N-acetylmuramoylalanine--D-glutamate ligase (508 aa).

138 to 144 provides a ligand contact to ATP; sequence GTNGKTT. The tract at residues 294–314 is disordered; it reads FDEPAPRRKKDAPPPTRAGGR.

This sequence belongs to the MurCDEF family.

The protein localises to the cytoplasm. It catalyses the reaction UDP-N-acetyl-alpha-D-muramoyl-L-alanine + D-glutamate + ATP = UDP-N-acetyl-alpha-D-muramoyl-L-alanyl-D-glutamate + ADP + phosphate + H(+). It participates in cell wall biogenesis; peptidoglycan biosynthesis. Its function is as follows. Cell wall formation. Catalyzes the addition of glutamate to the nucleotide precursor UDP-N-acetylmuramoyl-L-alanine (UMA). The chain is UDP-N-acetylmuramoylalanine--D-glutamate ligase from Bordetella parapertussis (strain 12822 / ATCC BAA-587 / NCTC 13253).